The chain runs to 204 residues: CASP-like protein 2A1 (204 aa).

Basic and acidic residues predominate over residues 1–11; the sequence is MEKSNDHDKAS. A disordered region spans residues 1–25; the sequence is MEKSNDHDKASHGGSGGGATEKWEE. Over 1–32 the chain is Cytoplasmic; sequence MEKSNDHDKASHGGSGGGATEKWEETSPGIRT. A helical membrane pass occupies residues 33–53; it reads AETMLRLAPVGLCVAALVVML. Over 54–74 the chain is Extracellular; it reads KDSETNEFGSISYSNLTAFRY. A glycan (N-linked (GlcNAc...) asparagine) is linked at asparagine 68. The helical transmembrane segment at 75–95 threads the bilayer; sequence LVHANGICAGYSLLSAAIAAM. Over 96–113 the chain is Cytoplasmic; sequence PRSSSTMPRVWTFFCLDQ. The helical transmembrane segment at 114 to 134 threads the bilayer; the sequence is LLTYLVLAAGAVSAEVLYLAY. The Extracellular portion of the chain corresponds to 135 to 155; the sequence is NGDSAITWSDACSSYGGFCHR. A helical transmembrane segment spans residues 156 to 176; the sequence is ATASVIITFFVVCFYILLSLI. Topologically, residues 177–204 are cytoplasmic; sequence SSYKLFTRFDPPSIVDSDKTLEVAVFGS.

This sequence belongs to the Casparian strip membrane proteins (CASP) family. As to quaternary structure, homodimer and heterodimers.

The protein localises to the cell membrane. The chain is CASP-like protein 2A1 from Arabidopsis lyrata subsp. lyrata (Lyre-leaved rock-cress).